We begin with the raw amino-acid sequence, 871 residues long: Serrate RNA effector molecule homolog (871 aa).

A disordered region spans residues methionine 1 to aspartate 90. N-acetylglycine is present on glycine 2. Serine 4 is modified (phosphoserine). Tyrosine 8 is subject to Phosphotyrosine. A compositionally biased stretch (basic and acidic residues) spans tyrosine 8–leucine 73. Phosphoserine is present on residues serine 67, serine 74, and serine 136. A Glycyl lysine isopeptide (Lys-Gly) (interchain with G-Cter in SUMO2) cross-link involves residue lysine 150. Residues glutamate 272 to cysteine 411 are disordered. Positions aspartate 297 to lysine 347 are enriched in basic and acidic residues. Residues serine 370–glutamate 385 show a composition bias toward acidic residues. A compositionally biased stretch (basic and acidic residues) spans alanine 386–cysteine 411. Residues serine 492 and serine 539 each carry the phosphoserine modification. Threonine 543 carries the post-translational modification Phosphothreonine. A Phosphoserine modification is found at serine 569. Positions glutamate 574–asparagine 597 are disordered. Residue threonine 670 is modified to Phosphothreonine. Residue serine 678 is modified to Phosphoserine. Omega-N-methylarginine is present on residues arginine 828, arginine 835, and arginine 845. The interval asparagine 830–valine 849 is disordered.

Belongs to the ARS2 family. As to quaternary structure, interacts with CASP8AP2, ERBB4, NCBP1/CBP80 and DROSHA. Interacts with LUZP4. Interacts with NCBP2/CBP20 and NCBP3. Interacts with MTREX.

The protein localises to the nucleus. It is found in the nucleoplasm. It localises to the cytoplasm. Functionally, acts as a mediator between the cap-binding complex (CBC) and the primary microRNAs (miRNAs) processing machinery during cell proliferation. Contributes to the stability and delivery of capped primary miRNA transcripts to the primary miRNA processing complex containing DGCR8 and DROSHA, thereby playing a role in RNA-mediated gene silencing (RNAi) by miRNAs. Binds capped RNAs (m7GpppG-capped RNA); however interaction is probably mediated via its interaction with NCBP1/CBP80 component of the CBC complex. Involved in cell cycle progression at S phase. Does not directly confer arsenite resistance but rather modulates arsenic sensitivity. Independently of its activity on miRNAs, necessary and sufficient to promote neural stem cell self-renewal. Does so by directly binding SOX2 promoter and positively regulating its transcription. This chain is Serrate RNA effector molecule homolog (SRRT), found in Pongo abelii (Sumatran orangutan).